Here is a 251-residue protein sequence, read N- to C-terminus: Hydroxyacylglutathione hydrolase (251 aa).

7 residues coordinate Zn(2+): histidine 53, histidine 55, aspartate 57, histidine 58, histidine 110, aspartate 127, and histidine 165.

This sequence belongs to the metallo-beta-lactamase superfamily. Glyoxalase II family. Monomer. Requires Zn(2+) as cofactor.

It carries out the reaction an S-(2-hydroxyacyl)glutathione + H2O = a 2-hydroxy carboxylate + glutathione + H(+). The protein operates within secondary metabolite metabolism; methylglyoxal degradation; (R)-lactate from methylglyoxal: step 2/2. Thiolesterase that catalyzes the hydrolysis of S-D-lactoyl-glutathione to form glutathione and D-lactic acid. The protein is Hydroxyacylglutathione hydrolase of Escherichia fergusonii (strain ATCC 35469 / DSM 13698 / CCUG 18766 / IAM 14443 / JCM 21226 / LMG 7866 / NBRC 102419 / NCTC 12128 / CDC 0568-73).